Here is a 415-residue protein sequence, read N- to C-terminus: Imidazolonepropionase (415 aa).

Residues His74 and His76 each contribute to the Fe(3+) site. Zn(2+) contacts are provided by His74 and His76. Positions 83, 146, and 179 each coordinate 4-imidazolone-5-propanoate. Residue Tyr146 coordinates N-formimidoyl-L-glutamate. His244 serves as a coordination point for Fe(3+). A Zn(2+)-binding site is contributed by His244. Gln247 lines the 4-imidazolone-5-propanoate pocket. Asp319 serves as a coordination point for Fe(3+). A Zn(2+)-binding site is contributed by Asp319. N-formimidoyl-L-glutamate contacts are provided by Asn321 and Gly323. Thr324 serves as a coordination point for 4-imidazolone-5-propanoate.

This sequence belongs to the metallo-dependent hydrolases superfamily. HutI family. It depends on Zn(2+) as a cofactor. Requires Fe(3+) as cofactor.

The protein resides in the cytoplasm. The catalysed reaction is 4-imidazolone-5-propanoate + H2O = N-formimidoyl-L-glutamate. Its pathway is amino-acid degradation; L-histidine degradation into L-glutamate; N-formimidoyl-L-glutamate from L-histidine: step 3/3. In terms of biological role, catalyzes the hydrolytic cleavage of the carbon-nitrogen bond in imidazolone-5-propanoate to yield N-formimidoyl-L-glutamate. It is the third step in the universal histidine degradation pathway. This chain is Imidazolonepropionase, found in Cupriavidus metallidurans (strain ATCC 43123 / DSM 2839 / NBRC 102507 / CH34) (Ralstonia metallidurans).